Here is a 92-residue protein sequence, read N- to C-terminus: Non-histone chromosomal protein 6 (92 aa).

2 disordered regions span residues 1–21 (MAPT…APKR) and 63–92 (EDKI…KNAA). Positions 19–87 (PKRSLSAYMF…RYEKEKAEYA (69 aa)) form a DNA-binding region, HMG box.

It belongs to the NHP6 family. As to quaternary structure, weakly associates with the stable SPT16-POB3 heterodimer to form the FACT complex.

It localises to the nucleus. It is found in the chromosome. In terms of biological role, DNA-binding protein that induces severe bending of DNA. Required for DNA-binding by the FACT complex, a general chromatin factor that acts to reorganize nucleosomes. The FACT complex is involved in multiple processes that require DNA as a template such as mRNA elongation, DNA replication and DNA repair. Also augments the fidelity of transcription by RNA polymerase III independently of any role in the FACT complex. The polypeptide is Non-histone chromosomal protein 6 (NHP6) (Debaryomyces hansenii (strain ATCC 36239 / CBS 767 / BCRC 21394 / JCM 1990 / NBRC 0083 / IGC 2968) (Yeast)).